Reading from the N-terminus, the 877-residue chain is Leucine--tRNA ligase (877 aa).

A 'HIGH' region motif is present at residues 43–53; the sequence is PYPSGRIHMGH. The short motif at 628 to 632 is the 'KMSKS' region element; it reads KMSKS. Lys631 lines the ATP pocket.

This sequence belongs to the class-I aminoacyl-tRNA synthetase family.

It localises to the cytoplasm. The enzyme catalyses tRNA(Leu) + L-leucine + ATP = L-leucyl-tRNA(Leu) + AMP + diphosphate. This chain is Leucine--tRNA ligase, found in Brucella suis biovar 1 (strain 1330).